The sequence spans 7214 residues: Nonribosomal peptide synthetase atnA (7214 aa).

The interval 257-651 is adenylation 1; the sequence is ERKALEQPHA…VGRKDTQVKI (395 aa). One can recognise a Carrier 1 domain in the interval 786–862; sequence EPVTETEKAV…AMSQIAVELS (77 aa). Residue Ser823 is modified to O-(pantetheine 4'-phosphoryl)serine. Residues 899–1318 are condensation 1; it reads EDAYPATALQ…LVSQKDYTQI (420 aa). Residues 1340–1735 are adenylation 2; that stretch reads QVLATPDAPA…ARKDTQAKVR (396 aa). A Carrier 2 domain is found at 1877–1953; sequence QPTSDIEKKV…ALAGRAQYIE (77 aa). O-(pantetheine 4'-phosphoryl)serine is present on Ser1914. The interval 1962–2384 is epimerization; sequence PEAEVIDEWF…RQVLETGIDE (423 aa). Residues 2431–2845 form a condensation 2 region; the sequence is SPCSPMQLGL…MLSPLDRASL (415 aa). The tract at residues 2866–3262 is adenylation 3; the sequence is QNARKRPHAL…VGRKDTQVKV (397 aa). Residues 3398–3472 enclose the Carrier 3 domain; sequence ALETPMEETI…DMARIVVAAY (75 aa). Ser3433 is subject to O-(pantetheine 4'-phosphoryl)serine. A condensation 3 region spans residues 3510 to 3904; the sequence is VEDVYPSTSL…QLCENEDGRL (395 aa). The segment at 3943-4339 is adenylation 4; it reads ERARLHPDLL…VGRKDSQVKL (397 aa). Residues 4476 to 4552 form the Carrier 4 domain; that stretch reads VPGSEAEKVI…ELAGRVTSIS (77 aa). An O-(pantetheine 4'-phosphoryl)serine modification is found at Ser4513. The condensation 4 stretch occupies residues 4601–5033; the sequence is VEDVYPCSPL…TSAAMRAQLL (433 aa). The tract at residues 5051–5446 is adenylation 5; it reads FHRTALRYPE…VGRKDTQIKF (396 aa). The interval 5489 to 5515 is disordered; the sequence is FITTEGGSGHENKGSPSLKGSSGDPVS. One can recognise a Carrier 5 domain in the interval 5591-5667; that stretch reads APRTAMEKRL…QMANIVARNA (77 aa). Ser5628 bears the O-(pantetheine 4'-phosphoryl)serine mark. A condensation 5 region spans residues 5707 to 6123; it reads QDVYPCTPLQ…HLLGDNEIKM (417 aa). The tract at residues 6145 to 6543 is adenylation 6; it reads ERAVLQPEAI…GRKDTQIKLR (399 aa). Residues 6683 to 6766 enclose the Carrier 6 domain; it reads DPADKLALAL…DVARMIEHGN (84 aa). Ser6725 bears the O-(pantetheine 4'-phosphoryl)serine mark. Residues 6814–7194 are thioesterase (TE) domain; the sequence is ILLTGATGFL…KSISYMRQIG (381 aa). Residues 6895 to 6915 form a disordered region; it reads STVEGRDHPGSESGSTAGPAE.

Belongs to the NRP synthetase family.

The protein operates within secondary metabolite biosynthesis. Functionally, nonribosomal peptide synthetase; part of the gene cluster that mediates the biosynthesis of aspercryptins, linear lipopeptides built from six amino acids including 2 highly unusual and nonproteogenic amino acids, 2-amino-octanoic acid (2aoa) and 2-amino-dodecanol (2adol). The core structure of aspercryptins is as follows: Ser/Ala-Thr-Ile/Val-2aoa-Asn-2adol. The first step of aspercryptin biosynthesis is the generation of the fatty acid precursors, octanoic and dodecanoic acids, by the FAS subunits atnF and atnM. The fatty acid precursors are likely transformed into the corresponding alpha-amino fatty acids in three steps. First, they are hydroxylated by the cytochrome P450 monooxygenase atnE, then oxidized to the corresponding alpha-keto acids by the NAD(P)-dependent oxidoreductase atnD, and finally converted to the alpha-amino fatty acids by the PLP-dependent aminotransferases atnH or atnJ. the alpha-amino fatty acids, 2-amino-octanoic and 2-amino-dodecanoic acids, are recognized, activated, and covalently tethered to the NRPS atnA by its fourth and sixth adenylation domains. The second module of atnA is the Thr module and contains an epimerase (E) domain responsible for the epimerization of Thr to D-allo-Thr. Additionally, despite atnA having only one epimerase domain, the first amino acid of aspercryptin A1 is D-Ser, suggesting that serine is either loaded directly as D-Ser on the first module or that the epimerase domain in the threonine module epimerizes both L-Ser and L-Thr. After condensation of the hexapeptide of aspercryptin, the C-terminal reductase (TE) domain might be involved in the reductive release and production of the aldehyde hexapeptide. Further reduction would generate aspercryptins. The variety of aspercryptins produced reflects the flexibility of the atnA NRPS, allowing incorporation of alanine instead of serine, valine for isoleucine, and a C10 fatty amino alcohol instead of the C12 version. AtnB seems to be involved in the selectivity for Ile versus Val by the third module. Moreover, type B, C and D aspercryptins have an additional N-terminal cichorine, acetyl and propionyl group respectively. The sequence is that of Nonribosomal peptide synthetase atnA from Emericella nidulans (strain FGSC A4 / ATCC 38163 / CBS 112.46 / NRRL 194 / M139) (Aspergillus nidulans).